Here is a 138-residue protein sequence, read N- to C-terminus: Histone H2AX (138 aa).

The disordered stretch occupies residues 1–23 (MSTTGKGGKAKGKTASSKQVSRS). N-acetylserine is present on S2. An N6-acetyllysine mark is found at K6, K9, K11, K13, and K18. S123 bears the Phosphoserine mark. K124 is covalently cross-linked (Glycyl lysine isopeptide (Lys-Gly) (interchain with G-Cter in ubiquitin)). Residues S125, S130, and S135 each carry the phosphoserine modification. The short motif at 135-136 (SQ) is the [ST]-Q motif element.

This sequence belongs to the histone H2A family. As to quaternary structure, the nucleosome is a histone octamer containing two molecules each of H2A, H2B, H3 and H4 assembled in one H3-H4 heterotetramer and two H2A-H2B heterodimers. The octamer wraps approximately 147 bp of DNA. Post-translationally, monoubiquitination of Lys-124 gives a specific tag for epigenetic transcriptional repression. Acetylation occurs almost exclusively in the MAC.

It localises to the nucleus. The protein localises to the chromosome. Its function is as follows. Core component of nucleosome. Nucleosomes wrap and compact DNA into chromatin, limiting DNA accessibility to the cellular machineries which require DNA as a template. Histones thereby play a central role in transcription regulation, DNA repair, DNA replication and chromosomal stability. DNA accessibility is regulated via a complex set of post-translational modifications of histones, also called histone code, and nucleosome remodeling. The chain is Histone H2AX (HTA1) from Tetrahymena pyriformis.